The primary structure comprises 603 residues: MSEYRIRVTTVDQKVGIFQVPRTKTVLELKELIAVTFEAPADRLKLIHAGRVLRNETPLEEILHDATDLVTFHLVIAVFNSTSTTLPSATSSSVPQSRTSELSSTNSIPTPRITSLNPEELSRRERAQRLLQTYNSFHGSGLGGLFPNIHRELESHGFSLPTHEQSSPVAESLDNSVSSALSPHLETLRRRNLSIHHQHIQAHEMAQESLETRNPGNISSSSAPLASDQSPTVSSNHIHASGNLALGSNSGLNPRSPNSFSSPLDNPALHTVDSTNVNGSLSPLSNSSSINQVHQNETHGSTISVPNPNLSQMGPSHSSSVPSNLSPNPAQNENPSTTSIPSINNQPFPSGLSASNSNFASSSFIPQSVPQLLPIYYQTIFYNGNYYLQQLPSASPPTMFRDHSFAPLVSPSIVSPYGVLENEETGECAFLFSPNASQPHFQPRAPTFGIPRNVRSLFTLPFFHTIRNIERHFRLFIRLALFCVLTTYNVSLSQTILLTSIMSVVFLLQTGALAPFINDNPLIQSGMRHIRNLQDEYRRRRNRTAQRVVEIPNETQTEDEQDGTNTPDNRADAEERELTRSQRIYRTVVRTIVAFALSFVPRA.

The Ubiquitin-like domain maps to tyrosine 4–phenylalanine 79. Disordered regions lie at residues threonine 85–leucine 121, serine 159–serine 178, and alanine 206–phenylalanine 348. Polar residues-rich tracts occupy residues valine 94–asparagine 117 and threonine 162–serine 178. Residues serine 219–proline 231 are compositionally biased toward low complexity. Positions leucine 246–leucine 264 are enriched in polar residues. Residues serine 280–serine 289 show a composition bias toward low complexity. A compositionally biased stretch (polar residues) spans isoleucine 290–glycine 314. Positions proline 315–proline 329 are enriched in low complexity. Residues alanine 330–phenylalanine 348 are compositionally biased toward polar residues. Residues isoleucine 496–phenylalanine 516 traverse the membrane as a helical segment. The segment at threonine 544–leucine 578 is disordered. Threonine 566 carries the phosphothreonine modification. Basic and acidic residues predominate over residues asparagine 569 to leucine 578.

Its subcellular location is the endoplasmic reticulum membrane. This is an uncharacterized protein from Schizosaccharomyces pombe (strain 972 / ATCC 24843) (Fission yeast).